Consider the following 108-residue polypeptide: Peptidyl-prolyl cis-trans isomerase FKBP1A (108 aa).

Positions 20–108 constitute a PPIase FKBP-type domain; the sequence is GQTCVVHYTG…VFDVELLKLE (89 aa). Lys-53 is subject to N6-acetyllysine; alternate. The residue at position 53 (Lys-53) is an N6-succinyllysine; alternate.

The protein belongs to the FKBP-type PPIase family. FKBP1 subfamily. As to quaternary structure, interacts with TGFBR1; prevents TGFBR1 phosphorylation by TGFBR2 and stabilizes it in the inactive conformation. Interacts with ACVR1B and SMAD7. Identified in a complex composed of RYR1, PDE4D, PKA, FKBP1A and protein phosphatase 1 (PP1). Interacts directly with RYR2 and RYR3. Interacts with GLMN; rapamycin and FK506 abolish the interaction with GLMN in a dose dependent manner. Interacts directly with RYR1.

Its subcellular location is the cytoplasm. The protein localises to the cytosol. The protein resides in the sarcoplasmic reticulum membrane. It catalyses the reaction [protein]-peptidylproline (omega=180) = [protein]-peptidylproline (omega=0). Inhibited by both FK506 and rapamycin. Its function is as follows. Keeps in an inactive conformation TGFBR1, the TGF-beta type I serine/threonine kinase receptor, preventing TGF-beta receptor activation in absence of ligand. Recruits SMAD7 to ACVR1B which prevents the association of SMAD2 and SMAD3 with the activin receptor complex, thereby blocking the activin signal. May modulate the RYR1 calcium channel activity. PPIases accelerate the folding of proteins. It catalyzes the cis-trans isomerization of proline imidic peptide bonds in oligopeptides. This Homo sapiens (Human) protein is Peptidyl-prolyl cis-trans isomerase FKBP1A (FKBP1A).